The primary structure comprises 251 residues: Flap endonuclease Xni (251 aa).

Asp-104 is a binding site for Mg(2+). The region spanning 160–249 (VLPQQLPDYW…IDGNLQQLRL (90 aa)) is the 5'-3' exonuclease domain. Leu-171, Ala-172, Pro-180, Val-182, and Ile-185 together coordinate K(+). The segment at 184 to 189 (GIGPKS) is interaction with DNA.

This sequence belongs to the Xni family. Mg(2+) serves as cofactor. It depends on K(+) as a cofactor.

Its function is as follows. Has flap endonuclease activity. During DNA replication, flap endonucleases cleave the 5'-overhanging flap structure that is generated by displacement synthesis when DNA polymerase encounters the 5'-end of a downstream Okazaki fragment. The chain is Flap endonuclease Xni from Citrobacter koseri (strain ATCC BAA-895 / CDC 4225-83 / SGSC4696).